Here is a 606-residue protein sequence, read N- to C-terminus: WD repeat-containing protein 1 (606 aa).

WD repeat units lie at residues 4 to 45 (EIKK…LRNI), 48 to 87 (PAIA…IWDT), 93 to 135 (LLKY…LWDT), 138 to 176 (SVGE…FFEG), 180 to 218 (KFKF…IYDG), 224 to 263 (VCAL…IWDV), 270 to 306 (STFP…YLDK), 311 to 351 (KPLR…YWDS), 358 to 408 (SFSG…KLDV), 432 to 474 (LKDQ…VYSI), 480 to 518 (KDEG…VFSV), 523 to 561 (SENN…VWTL), and 566 to 604 (TKVK…EWTI). 4 positions are modified to N6-acetyllysine: lysine 28, lysine 81, lysine 95, and lysine 115. Tyrosine 238 bears the Phosphotyrosine mark. N6-acetyllysine is present on lysine 480.

This sequence belongs to the WD repeat AIP1 family.

It localises to the cytoplasm. The protein resides in the cytoskeleton. It is found in the cell projection. The protein localises to the podosome. Its function is as follows. Induces disassembly of actin filaments in conjunction with ADF/cofilin family proteins. Enhances cofilin-mediated actin severing. Involved in cytokinesis. Involved in chemotactic cell migration by restricting lamellipodial membrane protrusions. Involved in myocardium sarcomere organization. Required for cardiomyocyte growth at the postnatal and maintenance at the adult stage. Involved in neutrophil actin dynamics and migration. Involved in megakaryocyte maturation and platelet shedding. Required for the establishment of planar cell polarity (PCP) during follicular epithelium development and for cell shape changes during PCP; the function seems to implicate cooperation with CFL1 and/or DSTN/ADF. Involved in the generation/maintenance of cortical tension. Involved in assembly and maintenance of epithelial apical cell junctions and plays a role in the organization of the perijunctional actomyosin belt. The chain is WD repeat-containing protein 1 (Wdr1) from Mus musculus (Mouse).